Here is a 642-residue protein sequence, read N- to C-terminus: Pentatricopeptide repeat-containing protein At3g16010 (642 aa).

14 PPR repeats span residues 125 to 159 (DCST…TYVS), 161 to 195 (SPAV…KCKP), 196 to 230 (TSST…GDCF), 232 to 266 (DTIT…CMQP), 267 to 301 (TEKI…GCSP), 302 to 336 (TVYT…GLTP), 337 to 371 (DVVF…RCTP), 372 to 407 (TVVS…SVSP), 408 to 442 (SEFT…GFPP), 443 to 473 (CPAA…LKEN), 478 to 512 (SSRV…GSGP), 513 to 547 (DVYA…GCRA), 548 to 582 (DINS…GIKP), and 583 to 617 (DGVT…GFEY).

Belongs to the PPR family. P subfamily.

This Arabidopsis thaliana (Mouse-ear cress) protein is Pentatricopeptide repeat-containing protein At3g16010.